A 499-amino-acid chain; its full sequence is Proline--tRNA ligase (499 aa).

It belongs to the class-II aminoacyl-tRNA synthetase family. ProS type 3 subfamily. In terms of assembly, homodimer.

The protein resides in the cytoplasm. The enzyme catalyses tRNA(Pro) + L-proline + ATP = L-prolyl-tRNA(Pro) + AMP + diphosphate. Catalyzes the attachment of proline to tRNA(Pro) in a two-step reaction: proline is first activated by ATP to form Pro-AMP and then transferred to the acceptor end of tRNA(Pro). The polypeptide is Proline--tRNA ligase (Bdellovibrio bacteriovorus (strain ATCC 15356 / DSM 50701 / NCIMB 9529 / HD100)).